Reading from the N-terminus, the 87-residue chain is Kappa-5-bungarotoxin (87 aa).

Positions 1–21 are cleaved as a signal peptide; sequence MKTLLLTLVVVTIVCLDLGYT. 5 disulfide bridges follow: cysteine 24–cysteine 42, cysteine 35–cysteine 63, cysteine 48–cysteine 52, cysteine 67–cysteine 79, and cysteine 80–cysteine 85.

Belongs to the three-finger toxin family. Long-chain subfamily. Kappa-neurotoxin sub-subfamily. As to quaternary structure, homo- and heterodimer; non-covalently linked. Expressed by the venom gland.

It is found in the secreted. In terms of biological role, postsynaptic neurotoxin that binds and inhibits neuronal nicotinic acetylcholine receptors (nAChR) with high affinity (IC(50)&lt;100 nM). Is a selective, and slowly reversible antagonist of alpha-3/CHRNA3-containing and some alpha-4/CHRNA4-containing AChRs. The chain is Kappa-5-bungarotoxin from Bungarus multicinctus (Many-banded krait).